The primary structure comprises 1034 residues: Vacuolar membrane protease (1034 aa).

The Cytoplasmic segment spans residues 1-11 (MAVKNPFGFTT). Residues 12-32 (GPVTFWLIVVYAAFLIPLVWI) form a helical membrane-spanning segment. Residues 33–418 (HESVPAVPSS…GFAILELRGL (386 aa)) lie on the Vacuolar side of the membrane. N-linked (GlcNAc...) asparagine glycosylation is found at N51 and N141. Zn(2+) is bound by residues H200 and D212. E246 serves as the catalytic Proton acceptor. Residues E247, E272, and H345 each coordinate Zn(2+). A helical transmembrane segment spans residues 419–439 (FAWTLTLLIVSPLVLALVTYI). The Cytoplasmic portion of the chain corresponds to 440–470 (LSRKDKYYFFSRKVTADEDDEPVSVGGWKGF). A helical membrane pass occupies residues 471 to 491 (FRFPFALVLSASITVLSAFLI). Topologically, residues 492-497 (RRVNPH) are vacuolar. Residues 498–518 (IIYSSPYAVWAMTLSLFFLVF) traverse the membrane as a helical segment. Over 519 to 536 (WTIAKGASVVRPSALQRG) the chain is Cytoplasmic. Residues 537 to 557 (YAHIWLFVISWVILVAVTAAA) traverse the membrane as a helical segment. Over 558-567 (DRFKIASGYP) the chain is Vacuolar. Residues 568–588 (FAFFHSAVFVSALISLCDLFA) traverse the membrane as a helical segment. Residues 589 to 703 (LPSKQEFARN…NLPSWTWFFQ (115 aa)) lie on the Cytoplasmic side of the membrane. The disordered stretch occupies residues 623–653 (HSHVEDDVAEEPTETTPLRSGENGNGNNGTI). The chain crosses the membrane as a helical span at residues 704–724 (LLLLAPITITVFLQIALFIVS). Residues 725-736 (AIHSAAADGNDP) are Vacuolar-facing. Residues 737-757 (ILVYAAIAAFSIIILLPATPF) form a helical membrane-spanning segment. At 758 to 762 (IHRAS) the chain is on the cytoplasmic side. The helical transmembrane segment at 763–783 (FYLPLFLLLVFFVTLIYNLVA) threads the bilayer. The Vacuolar portion of the chain corresponds to 784 to 1034 (FPFSAENRLK…LVEGRKKFRA (251 aa)). N805, N866, and N879 each carry an N-linked (GlcNAc...) asparagine glycan.

It belongs to the peptidase M28 family. Zn(2+) is required as a cofactor.

It is found in the vacuole membrane. Its function is as follows. May be involved in vacuolar sorting and osmoregulation. In Colletotrichum graminicola (strain M1.001 / M2 / FGSC 10212) (Maize anthracnose fungus), this protein is Vacuolar membrane protease.